Reading from the N-terminus, the 385-residue chain is Telomere-binding protein subunit beta (385 aa).

Disordered stretches follow at residues 231-329 and 343-385; these read AADH…ALTT and WHEK…AAKK. Basic residues predominate over residues 242-262; sequence GGAKGKGKAAAKAAKGKKLSA. The span at 263–280 shows a compositional bias: basic and acidic residues; sequence KKGDSSAADVRKSVDKIV. 3 stretches are compositionally biased toward low complexity: residues 295–304, 312–326, and 365–375; these read KSQAPAAGKS, KAVP…KKSA, and GKASATSGKAS. Over residues 376–385 the composition is skewed to basic residues; sequence KASKKTAAKK.

Heterodimer of an alpha and a beta subunit.

The protein localises to the nucleus. The protein resides in the chromosome. Its subcellular location is the telomere. Functionally, may function as protective capping of the single-stranded telomeric overhang. May also participate in telomere length regulation during DNA replication. Binds specifically to the T4G4-containing extension on the 3'strand and protects this region of the telomere from nuclease digestion and chemical modification. This Sterkiella nova (Ciliate) protein is Telomere-binding protein subunit beta (MAC-41A).